Consider the following 177-residue polypeptide: Large ribosomal subunit protein uL5 (177 aa).

Belongs to the universal ribosomal protein uL5 family. Part of the 50S ribosomal subunit; part of the 5S rRNA/L5/L18/L25 subcomplex. Contacts the 5S rRNA and the P site tRNA. Forms a bridge to the 30S subunit in the 70S ribosome.

Its function is as follows. This is one of the proteins that bind and probably mediate the attachment of the 5S RNA into the large ribosomal subunit, where it forms part of the central protuberance. In the 70S ribosome it contacts protein S13 of the 30S subunit (bridge B1b), connecting the 2 subunits; this bridge is implicated in subunit movement. Contacts the P site tRNA; the 5S rRNA and some of its associated proteins might help stabilize positioning of ribosome-bound tRNAs. This is Large ribosomal subunit protein uL5 from Ehrlichia canis (strain Jake).